The following is a 378-amino-acid chain: UDP-N-acetylglucosamine--N-acetylmuramyl-(pentapeptide) pyrophosphoryl-undecaprenol N-acetylglucosamine transferase (378 aa).

UDP-N-acetyl-alpha-D-glucosamine is bound by residues 14 to 16 (TGG), Asn-125, Arg-165, Ser-193, and Gln-293.

It belongs to the glycosyltransferase 28 family. MurG subfamily.

Its subcellular location is the cell inner membrane. The enzyme catalyses di-trans,octa-cis-undecaprenyl diphospho-N-acetyl-alpha-D-muramoyl-L-alanyl-D-glutamyl-meso-2,6-diaminopimeloyl-D-alanyl-D-alanine + UDP-N-acetyl-alpha-D-glucosamine = di-trans,octa-cis-undecaprenyl diphospho-[N-acetyl-alpha-D-glucosaminyl-(1-&gt;4)]-N-acetyl-alpha-D-muramoyl-L-alanyl-D-glutamyl-meso-2,6-diaminopimeloyl-D-alanyl-D-alanine + UDP + H(+). The protein operates within cell wall biogenesis; peptidoglycan biosynthesis. Functionally, cell wall formation. Catalyzes the transfer of a GlcNAc subunit on undecaprenyl-pyrophosphoryl-MurNAc-pentapeptide (lipid intermediate I) to form undecaprenyl-pyrophosphoryl-MurNAc-(pentapeptide)GlcNAc (lipid intermediate II). The sequence is that of UDP-N-acetylglucosamine--N-acetylmuramyl-(pentapeptide) pyrophosphoryl-undecaprenol N-acetylglucosamine transferase from Bartonella tribocorum (strain CIP 105476 / IBS 506).